We begin with the raw amino-acid sequence, 212 residues long: Transcription antitermination protein NusB (212 aa).

It belongs to the NusB family.

Involved in transcription antitermination. Required for transcription of ribosomal RNA (rRNA) genes. Binds specifically to the boxA antiterminator sequence of the ribosomal RNA (rrn) operons. This chain is Transcription antitermination protein NusB, found in Gloeothece citriformis (strain PCC 7424) (Cyanothece sp. (strain PCC 7424)).